A 173-amino-acid polypeptide reads, in one-letter code: Acireductone dioxygenase 1 (173 aa).

Positions 96, 98, 102, and 140 each coordinate Fe(2+). 4 residues coordinate Ni(2+): histidine 96, histidine 98, glutamate 102, and histidine 140.

Belongs to the acireductone dioxygenase (ARD) family. In terms of assembly, monomer. It depends on Fe(2+) as a cofactor. Ni(2+) is required as a cofactor.

It carries out the reaction 1,2-dihydroxy-5-(methylsulfanyl)pent-1-en-3-one + O2 = 3-(methylsulfanyl)propanoate + CO + formate + 2 H(+). The catalysed reaction is 1,2-dihydroxy-5-(methylsulfanyl)pent-1-en-3-one + O2 = 4-methylsulfanyl-2-oxobutanoate + formate + 2 H(+). Its pathway is amino-acid biosynthesis; L-methionine biosynthesis via salvage pathway; L-methionine from S-methyl-5-thio-alpha-D-ribose 1-phosphate: step 5/6. Its function is as follows. Catalyzes 2 different reactions between oxygen and the acireductone 1,2-dihydroxy-3-keto-5-methylthiopentene (DHK-MTPene) depending upon the metal bound in the active site. Fe-containing acireductone dioxygenase (Fe-ARD) produces formate and 2-keto-4-methylthiobutyrate (KMTB), the alpha-ketoacid precursor of methionine in the methionine recycle pathway. Ni-containing acireductone dioxygenase (Ni-ARD) produces methylthiopropionate, carbon monoxide and formate, and does not lie on the methionine recycle pathway. The protein is Acireductone dioxygenase 1 of Pectobacterium atrosepticum (strain SCRI 1043 / ATCC BAA-672) (Erwinia carotovora subsp. atroseptica).